A 164-amino-acid chain; its full sequence is uncharacterized protein (164 aa).

The next 2 membrane-spanning stretches (helical) occupy residues 11 to 31 (FYVN…PSLL) and 51 to 71 (CQQY…LVLV).

Its subcellular location is the membrane. This is an uncharacterized protein from Saccharomyces cerevisiae (strain ATCC 204508 / S288c) (Baker's yeast).